The primary structure comprises 284 residues: uncharacterized protein (284 aa).

The C3H1-type zinc-finger motif lies at 37 to 65; it reads NEKKLICFSIINGENCIYGPNCTYAHSLS.

This is an uncharacterized protein from Acanthamoeba polyphaga (Amoeba).